Consider the following 312-residue polypeptide: Porphobilinogen deaminase (312 aa).

Cys-241 carries the S-(dipyrrolylmethanemethyl)cysteine modification.

This sequence belongs to the HMBS family. As to quaternary structure, monomer. It depends on dipyrromethane as a cofactor.

The catalysed reaction is 4 porphobilinogen + H2O = hydroxymethylbilane + 4 NH4(+). It functions in the pathway porphyrin-containing compound metabolism; protoporphyrin-IX biosynthesis; coproporphyrinogen-III from 5-aminolevulinate: step 2/4. Its pathway is porphyrin-containing compound metabolism; chlorophyll biosynthesis. Its function is as follows. Tetrapolymerization of the monopyrrole PBG into the hydroxymethylbilane pre-uroporphyrinogen in several discrete steps. The chain is Porphobilinogen deaminase from Prosthecochloris aestuarii (strain DSM 271 / SK 413).